Here is a 919-residue protein sequence, read N- to C-terminus: Probable dipeptidyl-aminopeptidase B (919 aa).

Residues 1–10 (MRPSDDHGET) are compositionally biased toward basic and acidic residues. A disordered region spans residues 1 to 50 (MRPSDDHGETSEFLPITRSRSVSAASQTSTDSSLSTESLFPGEQKPFPNV). Topologically, residues 1–92 (MRPSDDHGET…AATGGGRARR (92 aa)) are cytoplasmic. Over residues 21–38 (SVSAASQTSTDSSLSTES) the composition is skewed to low complexity. A helical; Signal-anchor for type II membrane protein transmembrane segment spans residues 93-113 (IFWILVLLCLGGWLLAFALFL). Residues 114-919 (TGGRANYQTA…MKRSLPLLYP (806 aa)) lie on the Vacuolar side of the membrane. Residues asparagine 200, asparagine 352, and asparagine 643 are each glycosylated (N-linked (GlcNAc...) asparagine). The active-site Charge relay system is serine 757. N-linked (GlcNAc...) asparagine glycosylation occurs at asparagine 811. Residues aspartate 834 and histidine 867 each act as charge relay system in the active site.

It belongs to the peptidase S9B family.

It localises to the vacuole membrane. It catalyses the reaction Release of an N-terminal dipeptide, Xaa-Yaa-|-Zaa-, from a polypeptide, preferentially when Yaa is Pro, provided Zaa is neither Pro nor hydroxyproline.. Type IV dipeptidyl-peptidase which removes N-terminal dipeptides sequentially from polypeptides having unsubstituted N-termini provided that the penultimate residue is proline. The chain is Probable dipeptidyl-aminopeptidase B (dapB) from Neosartorya fischeri (strain ATCC 1020 / DSM 3700 / CBS 544.65 / FGSC A1164 / JCM 1740 / NRRL 181 / WB 181) (Aspergillus fischerianus).